The chain runs to 544 residues: CTP synthase (544 aa).

The interval 1-265 is amidoligase domain; it reads MTQYIFITGG…DDLVVKHFGL (265 aa). Ser13 lines the CTP pocket. Ser13 contributes to the UTP binding site. Residues 14-19 and Asp71 contribute to the ATP site; that span reads SLGKGI. 2 residues coordinate Mg(2+): Asp71 and Glu139. Residues 146–148, 186–191, and Lys222 each bind CTP; these read DIE and KTKPTQ. Residues 186-191 and Lys222 each bind UTP; that span reads KTKPTQ. The 252-residue stretch at 290-541 folds into the Glutamine amidotransferase type-1 domain; the sequence is TVAMVGKYVN…IAAALDYQTE (252 aa). An L-glutamine-binding site is contributed by Gly351. The active-site Nucleophile; for glutamine hydrolysis is the Cys378. Residues 379 to 382, Glu402, and Arg469 contribute to the L-glutamine site; that span reads LGLQ. Catalysis depends on residues His514 and Glu516.

Belongs to the CTP synthase family. As to quaternary structure, homotetramer.

It catalyses the reaction UTP + L-glutamine + ATP + H2O = CTP + L-glutamate + ADP + phosphate + 2 H(+). The enzyme catalyses L-glutamine + H2O = L-glutamate + NH4(+). The catalysed reaction is UTP + NH4(+) + ATP = CTP + ADP + phosphate + 2 H(+). The protein operates within pyrimidine metabolism; CTP biosynthesis via de novo pathway; CTP from UDP: step 2/2. With respect to regulation, allosterically activated by GTP, when glutamine is the substrate; GTP has no effect on the reaction when ammonia is the substrate. The allosteric effector GTP functions by stabilizing the protein conformation that binds the tetrahedral intermediate(s) formed during glutamine hydrolysis. Inhibited by the product CTP, via allosteric rather than competitive inhibition. Functionally, catalyzes the ATP-dependent amination of UTP to CTP with either L-glutamine or ammonia as the source of nitrogen. Regulates intracellular CTP levels through interactions with the four ribonucleotide triphosphates. The chain is CTP synthase from Dichelobacter nodosus (strain VCS1703A).